We begin with the raw amino-acid sequence, 345 residues long: MEKTIGLEIIEVVEQAAIASARLMGKGEKNEADRVAVEAMRVRMNQVEMLGRIVIGEGERDEAPMLYIGEEVGIYRDADKRAGVPAGKLVEIDIAVDPCEGTNLCAYGQPGSMAVLAISEKGGLFAAPDFYMKKLAAPPAAKGKVDINKSATENLKILSECLDRAIDELVVVVMDRPRHKELIQEIRQAGARVRLISDGDVSAAISCGFAGTNTHALMGIGAAPEGVISAAAMRCLGGHFQGQLIYDPEVVKTGLIGESRESNIARLQEMGITDPDRVYDANELASGQEVLFAACGITPGLLMEGVRFFKGGARTQSLVISSQSRTARFVDTVHMFDDVKTVSLR.

The Mn(2+) site is built by Asp33, Glu57, Asp97, and Glu100. Residues 100-102, Tyr131, 176-178, and 198-200 contribute to the substrate site; these read EGT, RPR, and DGD. Glu225 contacts Mn(2+).

Belongs to the FBPase class 2 family. In terms of assembly, homotetramer. The cofactor is Mn(2+).

It catalyses the reaction beta-D-fructose 1,6-bisphosphate + H2O = beta-D-fructose 6-phosphate + phosphate. The enzyme catalyses D-sedoheptulose 1,7-bisphosphate + H2O = D-sedoheptulose 7-phosphate + phosphate. It participates in carbohydrate biosynthesis; Calvin cycle. With respect to regulation, inhibited by AMP and slightly innibited by hydrogen peroxyde. In terms of biological role, catalyzes the hydrolysis of fructose 1,6-bisphosphate (Fru 1,6-P2) and sedoheptulose 1,7-bisphosphate (Sed 1,7-P2) to fructose 6-phosphate and sedoheptulose 7-phosphate, respectively. In Synechococcus elongatus (strain ATCC 33912 / PCC 7942 / FACHB-805) (Anacystis nidulans R2), this protein is D-fructose 1,6-bisphosphatase class 2/sedoheptulose 1,7-bisphosphatase.